Consider the following 393-residue polypeptide: Sialyltransferase-like protein 1 (393 aa).

The Cytoplasmic portion of the chain corresponds to 1-8; the sequence is MKRPLRRP. The helical; Signal-anchor for type II membrane protein transmembrane segment at 9–27 threads the bilayer; that stretch reads FAVLLFVVLCAAASFPSVL. Topologically, residues 28–393 are lumenal; the sequence is RRSVGPAPVL…IAVPPVVFYH (366 aa). 3 N-linked (GlcNAc...) asparagine glycosylation sites follow: asparagine 49, asparagine 212, and asparagine 258.

Belongs to the glycosyltransferase 29 family. In terms of tissue distribution, expressed in leaves and stalks. Expressed at low levels in roots.

The protein localises to the golgi apparatus membrane. Functionally, possesses sialyltransferase-like activity in vitro. Transfers sialic acid to the oligosaccharide Gal-beta-1,3-GalNAc and to glycoproteins such as asialofetuin, alpha-1-acid glycoprotein (NeuAc-alpha-2,3-Gal-beta-1,3-GalNAc-) and andasialo-alpha-1-acid glycoprotein. The transferred sialic acid is linked to galactose of Gal-beta-1,3-GalNAc through alpha-2,6-linkage. The sequence is that of Sialyltransferase-like protein 1 from Oryza sativa subsp. japonica (Rice).